Consider the following 131-residue polypeptide: Ribonuclease VapC4 (131 aa).

Positions 4–106 (IVPDTNFLIY…IVATNDKELK (103 aa)) constitute a PINc domain. Mg(2+)-binding residues include aspartate 7 and aspartate 102.

This sequence belongs to the PINc/VapC protein family. Mg(2+) serves as cofactor.

Functionally, toxic component of a type II toxin-antitoxin (TA) system. An RNase. Its cognate antitoxin is VapB4. The protein is Ribonuclease VapC4 of Methanocaldococcus jannaschii (strain ATCC 43067 / DSM 2661 / JAL-1 / JCM 10045 / NBRC 100440) (Methanococcus jannaschii).